The sequence spans 234 residues: UPF0309 protein lmo0025 (234 aa).

The SIS domain maps to 31-205 (VADSIMNDGI…ELMLEKGYTP (175 aa)).

Belongs to the UPF0309 family.

The chain is UPF0309 protein lmo0025 from Listeria monocytogenes serovar 1/2a (strain ATCC BAA-679 / EGD-e).